Reading from the N-terminus, the 289-residue chain is YLVNPAGYAALGAYMFLLILIGFPVNFLTLYVTLEHKKLRTPLNYILLNLAVADLFMVLGGFTTTMYTSMHGYFVLGRLGCNLEGFFATLGGEIALWSLVVLAIERWIVGLKPIRNFRFTEDHAIMGLAFSWVMALSCAVPPLAGWLRYIPEGIQGSCGVDYYTRAEGFNNESFVIYMFTVHFLIPLSVIFFCYGRLLCAVKEAAAAQQESETTQRAEKEVSRMVVIMVIGFLVCWLPYASVAWWIFCNQGSDFGPIFMTLPSFFAKRPAIYNPMIYICMNKQFRHCMI.

At 1 to 7 (YLVNPAG) the chain is on the extracellular side. A helical membrane pass occupies residues 8 to 32 (YAALGAYMFLLILIGFPVNFLTLYV). Residues 33–44 (TLEHKKLRTPLN) lie on the Cytoplasmic side of the membrane. Residues 45-67 (YILLNLAVADLFMVLGGFTTTMY) form a helical membrane-spanning segment. Over 68-81 (TSMHGYFVLGRLGC) the chain is Extracellular. Cysteine 81 and cysteine 158 are joined by a disulfide. A helical membrane pass occupies residues 82 to 104 (NLEGFFATLGGEIALWSLVVLAI). The 'Ionic lock' involved in activated form stabilization signature appears at 105 to 107 (ERW). Residues 105-123 (ERWIVGLKPIRNFRFTEDH) lie on the Cytoplasmic side of the membrane. A helical transmembrane segment spans residues 124 to 144 (AIMGLAFSWVMALSCAVPPLA). The Extracellular segment spans residues 145–173 (GWLRYIPEGIQGSCGVDYYTRAEGFNNES). An N-linked (GlcNAc...) asparagine glycan is attached at asparagine 171. A helical membrane pass occupies residues 174–195 (FVIYMFTVHFLIPLSVIFFCYG). The Cytoplasmic segment spans residues 196 to 223 (RLLCAVKEAAAAQQESETTQRAEKEVSR). A helical transmembrane segment spans residues 224 to 245 (MVVIMVIGFLVCWLPYASVAWW). Over 246–257 (IFCNQGSDFGPI) the chain is Extracellular. A helical transmembrane segment spans residues 258–279 (FMTLPSFFAKRPAIYNPMIYIC). An N6-(retinylidene)lysine modification is found at lysine 267. At 280–289 (MNKQFRHCMI) the chain is on the cytoplasmic side.

It belongs to the G-protein coupled receptor 1 family. Opsin subfamily. In terms of processing, phosphorylated on some or all of the serine and threonine residues present in the C-terminal region. Post-translationally, contains one covalently linked retinal chromophore.

Its subcellular location is the membrane. It is found in the cell projection. The protein localises to the cilium. The protein resides in the photoreceptor outer segment. Functionally, photoreceptor required for image-forming vision at low light intensity. While most salt water fish species use retinal as chromophore, most freshwater fish use 3-dehydroretinal, or a mixture of retinal and 3-dehydroretinal. Light-induced isomerization of 11-cis to all-trans retinal triggers a conformational change that activates signaling via G-proteins. Subsequent receptor phosphorylation mediates displacement of the bound G-protein alpha subunit by arrestin and terminates signaling. The protein is Rhodopsin (rho) of Limnocottus pallidus (Ray-finned fish).